A 209-amino-acid polypeptide reads, in one-letter code: Uracil phosphoribosyltransferase (209 aa).

Residues R79, R104, and 131–139 (DPMLATGAS) each bind 5-phospho-alpha-D-ribose 1-diphosphate. Uracil contacts are provided by residues I194 and 199–201 (GDA). Residue D200 coordinates 5-phospho-alpha-D-ribose 1-diphosphate.

This sequence belongs to the UPRTase family. Mg(2+) serves as cofactor.

The enzyme catalyses UMP + diphosphate = 5-phospho-alpha-D-ribose 1-diphosphate + uracil. Its pathway is pyrimidine metabolism; UMP biosynthesis via salvage pathway; UMP from uracil: step 1/1. Its activity is regulated as follows. Allosterically activated by GTP. Catalyzes the conversion of uracil and 5-phospho-alpha-D-ribose 1-diphosphate (PRPP) to UMP and diphosphate. This is Uracil phosphoribosyltransferase from Staphylococcus saprophyticus subsp. saprophyticus (strain ATCC 15305 / DSM 20229 / NCIMB 8711 / NCTC 7292 / S-41).